Reading from the N-terminus, the 305-residue chain is Mitogen-activated protein kinase kinase 10 (305 aa).

At S34 the chain carries Phosphoserine. Positions L48 to V302 constitute a Protein kinase domain. ATP-binding positions include L54–V62 and K77. The Proton acceptor role is filled by D165. Phosphothreonine is present on T200.

Belongs to the protein kinase superfamily. STE Ser/Thr protein kinase family. MAP kinase kinase subfamily. In terms of assembly, interacts with P.syringae type III effector HopF2.

It carries out the reaction L-seryl-[protein] + ATP = O-phospho-L-seryl-[protein] + ADP + H(+). It catalyses the reaction L-threonyl-[protein] + ATP = O-phospho-L-threonyl-[protein] + ADP + H(+). The enzyme catalyses L-tyrosyl-[protein] + ATP = O-phospho-L-tyrosyl-[protein] + ADP + H(+). The protein is Mitogen-activated protein kinase kinase 10 (MKK10) of Arabidopsis thaliana (Mouse-ear cress).